Here is a 186-residue protein sequence, read N- to C-terminus: Mating-type-like protein ALPHA2 (186 aa).

A DNA-binding region (homeobox; TALE-type) is located at residues 108-170; that stretch reads ASYRGHRFTR…NRRRKQKSIY (63 aa).

It belongs to the TALE/M-ATYP homeobox family.

The protein localises to the nucleus. Its function is as follows. Mating type proteins are sequence specific DNA-binding proteins that act as master switches in yeast differentiation by controlling gene expression in a cell type-specific fashion. In Candida glabrata (strain ATCC 2001 / BCRC 20586 / JCM 3761 / NBRC 0622 / NRRL Y-65 / CBS 138) (Yeast), this protein is Mating-type-like protein ALPHA2 (MTL1ALPHA2).